The primary structure comprises 188 residues: Inner kinetochore subunit cnl2 (188 aa).

The protein belongs to the NKP2 family. Component of the inner kinetochore constitutive centromere-associated network (CCAN) (also known as central kinetochore Sim4 complex in fission yeast), which is composed of at least cnl2, cnp3, cnp20, fta1, fta2, fta3, fta4, fta6, fta7, mal2, mhf1, mhf2, mis6, mis15, mis17, sim4 and wip1.

It localises to the cytoplasm. The protein localises to the nucleus. The protein resides in the chromosome. Its subcellular location is the centromere. It is found in the kinetochore. In terms of biological role, component of the kinetochore, a multiprotein complex that assembles on centromeric DNA and attaches chromosomes to spindle microtubules, mediating chromosome segregation and sister chromatid segregation during meiosis and mitosis. Component of the inner kinetochore constitutive centromere-associated network (CCAN), which serves as a structural platform for outer kinetochore assembly. The polypeptide is Inner kinetochore subunit cnl2 (cnl2) (Schizosaccharomyces pombe (strain 972 / ATCC 24843) (Fission yeast)).